Consider the following 584-residue polypeptide: Cytosolic Fe-S cluster assembly factor NAR1 (584 aa).

The [4Fe-4S] cluster site is built by Cys20, Cys81, Cys84, Cys87, Cys190, Cys245, Cys465, and Cys469.

Belongs to the NARF family.

In terms of biological role, component of the cytosolic Fe/S protein assembly machinery. Required for maturation of extramitochondrial Fe/S proteins. May play a role in the transfer of pre-assembled Fe/S clusters to target apoproteins. The protein is Cytosolic Fe-S cluster assembly factor NAR1 (NAR1) of Candida dubliniensis (strain CD36 / ATCC MYA-646 / CBS 7987 / NCPF 3949 / NRRL Y-17841) (Yeast).